A 742-amino-acid chain; its full sequence is MSEAQAPLITEEAAERGLASSGSRRLSDGGGGQGSRKYRRRSDALAHGDRYQKAAALVDLAEDGVGIPEDVLNDTRFGRAMSFYFVYLRLDWLWSLNIFALILLNFLEKPLWCRKDALHACDQRDMYFLGQLPYFSKTESLIYEGLTLVILVMEILCPLSYEGLNIFWRSTTNKLKILLLFILACDILVFAFSSQPFRLAPYIRVVFLIMTIRELRMCAITLAGLIGTYLNVLALSLLFLLFASWLAYVTFEDTPQGKTIFSSYGVTLYQMFVLFTTSNNPDVWVPAYKISRWYSLFFIVYVLLGVYFLTNLILAVIYDSFKEQFAKQLVQVDAIRKNILQKAFELIDTNTRGYLDREQCISLLNELNKYRSLPKTSREDFELIFAELDRSGDFKVTSEEFADLCNTIAIKFQKEPPPSYLEKFPFYHSPVCGRLKSFVRSRTFEYIIVFVLLINLVAVIIETTLDIENSSSQETWQEVEFFLGWIYVAEMALKIFSLGFGAYWMEGQNKFDFVLTWTIFIGETLTFAFPSKLPFLSNGEWIRYLLLGRVLRLTRILLQVQRFRVFVATFFTLMSSLMPYLGIVFCILCMYCSLGLQIFGGIVYAGNPTLEETDLFSNDYLLFNFNDYPSGMVTLFNLLVMGNWQVWMESYWQLTGSSWSLIYFVSFYLISILLLLNLIVAFVLEAFFAEMELEKGEEVDIQSPTSGGIKKRRSMRVRSKGTMVDILLHHMLSNELDGSQNS.

Residues 1-44 form a disordered region; it reads MSEAQAPLITEEAAERGLASSGSRRLSDGGGGQGSRKYRRRSDA. At 1–82 the chain is on the cytoplasmic side; that stretch reads MSEAQAPLIT…NDTRFGRAMS (82 aa). The chain crosses the membrane as a helical span at residues 83–103; it reads FYFVYLRLDWLWSLNIFALIL. Topologically, residues 104–140 are extracellular; the sequence is LNFLEKPLWCRKDALHACDQRDMYFLGQLPYFSKTES. The chain crosses the membrane as a helical span at residues 141–161; that stretch reads LIYEGLTLVILVMEILCPLSY. Residues 162–176 are Cytoplasmic-facing; that stretch reads EGLNIFWRSTTNKLK. Residues 177–197 traverse the membrane as a helical segment; sequence ILLLFILACDILVFAFSSQPF. At 198-204 the chain is on the extracellular side; the sequence is RLAPYIR. Residues 205-226 traverse the membrane as a helical; Voltage-sensor segment; it reads VVFLIMTIRELRMCAITLAGLI. Residues 227–247 traverse the membrane as a helical segment; the sequence is GTYLNVLALSLLFLLFASWLA. At 248–258 the chain is on the extracellular side; that stretch reads YVTFEDTPQGK. The pore-forming intramembrane region spans 259-273; it reads TIFSSYGVTLYQMFV. Residues 274-296 lie on the Extracellular side of the membrane; the sequence is LFTTSNNPDVWVPAYKISRWYSL. A helical membrane pass occupies residues 297-317; sequence FFIVYVLLGVYFLTNLILAVI. At 318–446 the chain is on the cytoplasmic side; that stretch reads YDSFKEQFAK…SFVRSRTFEY (129 aa). 2 EF-hand domains span residues 335-370 and 376-411; these read IRKNILQKAFELIDTNTRGYLDREQCISLLNELNKY and TSREDFELIFAELDRSGDFKVTSEEFADLCNTIAIK. The helical transmembrane segment at 447–467 threads the bilayer; the sequence is IIVFVLLINLVAVIIETTLDI. Topologically, residues 468–480 are extracellular; sequence ENSSSQETWQEVE. Asn-469 carries N-linked (GlcNAc...) asparagine glycosylation. The chain crosses the membrane as a helical span at residues 481 to 501; sequence FFLGWIYVAEMALKIFSLGFG. Residues 502 to 510 are Cytoplasmic-facing; it reads AYWMEGQNK. Residues 511–531 form a helical membrane-spanning segment; it reads FDFVLTWTIFIGETLTFAFPS. Residues 532–540 are Extracellular-facing; that stretch reads KLPFLSNGE. The helical; Voltage-sensor transmembrane segment at 541 to 558 threads the bilayer; it reads WIRYLLLGRVLRLTRILL. Topologically, residues 559–582 are cytoplasmic; that stretch reads QVQRFRVFVATFFTLMSSLMPYLG. Residues 583 to 603 traverse the membrane as a helical segment; it reads IVFCILCMYCSLGLQIFGGIV. Residues 604–627 lie on the Extracellular side of the membrane; that stretch reads YAGNPTLEETDLFSNDYLLFNFND. The pore-forming intramembrane region spans 628–642; sequence YPSGMVTLFNLLVMG. At 643 to 663 the chain is on the extracellular side; sequence NWQVWMESYWQLTGSSWSLIY. A helical membrane pass occupies residues 664-684; the sequence is FVSFYLISILLLLNLIVAFVL. The Cytoplasmic portion of the chain corresponds to 685–742; the sequence is EAFFAEMELEKGEEVDIQSPTSGGIKKRRSMRVRSKGTMVDILLHHMLSNELDGSQNS.

It belongs to the calcium channel alpha-1 subunit (TC 1.A.1.11) family. Two pore calcium channel subfamily. Homodimer.

It is found in the membrane. Inhibited by Al(3+). Functions as a voltage-gated inward-rectifying Ca(2+) channel (VDCC) across the plasma membrane that mediates sucrose-induced Ca(2+) influx in autotrophically grown leaf cells. Acts as the major ROS-responsive Ca(2+) channel and is the possible target of Al-dependent inhibition. Plays a regulatory role in defense responses. The protein is Two pore calcium channel protein 1 (TPC1) of Hordeum vulgare (Barley).